The chain runs to 471 residues: U1 small nuclear ribonucleoprotein 70 kDa (471 aa).

A disordered region spans residues 48–78 (FEDPRDAPPPTRAETREERMERKRREKIERR). A compositionally biased stretch (basic and acidic residues) spans 60–78 (AETREERMERKRREKIERR). A required for interaction with U1 RNA region spans residues 92 to 202 (HNDQNAQGDA…GGGLGGTRRG (111 aa)). The RRM domain occupies 103 to 184 (KTLFVARVNY…LVDVERGRTV (82 aa)). Residues 187–471 (WRPRRLGGGL…NGYMMEPPME (285 aa)) are disordered. Positions 192–201 (LGGGLGGTRR) are enriched in gly residues. The span at 207–245 (NIRHSGRDDTSRYDERDRDRERERDRRERSRERDKERER) shows a compositional bias: basic and acidic residues. Residues 246 to 259 (RRSRSRERRRRSRS) are compositionally biased toward basic residues. Residues 260-293 (REKEERKRSRERSRDKDKDKDKDKDKEKDKDKDR) show a composition bias toward basic and acidic residues. Residues 294-303 (DRKRRSRSRE) are compositionally biased toward basic residues. Composition is skewed to basic and acidic residues over residues 304–321 (RKRERDRDREKKEDRVEG) and 344–428 (IELK…ERVP).

Component of the U1 snRNP. The U1 snRNP is composed of the U1 snRNA and the 7 core Sm proteins snrpb, snrpd1, snrpd2, snrpd3, snrpe, snrpf and snrpg that assemble in a heptameric protein ring on the Sm site of the small nuclear RNA to form the core snRNP, and at least three U1 snRNP-specific proteins snrnp70/U1-70K, snrpa/U1-A and snrpc/U1-C.

The protein localises to the nucleus speckle. The protein resides in the nucleus. It is found in the nucleoplasm. Its function is as follows. Component of the spliceosomal U1 snRNP, which is essential for recognition of the pre-mRNA 5' splice-site and the subsequent assembly of the spliceosome. snrnp70 binds to the loop I region of U1-snRNA. The protein is U1 small nuclear ribonucleoprotein 70 kDa (snrnp70) of Xenopus tropicalis (Western clawed frog).